Consider the following 302-residue polypeptide: MDIDTKIKAYRFVAYSAVVFSVIAVLSVCITLPIVYNYVHTVRRQLHNEALTCKGSMKDVWADVHHLRVDAASNRTARAVRYGRDDAAAGNGPNFDSGCEGCCQPGPQGAPGAPGKPGRPGKPGAPGFPGNPGKAPQKPCEEITPPPCKPCPQGPPGAPGLPGDQGDKGEAGQPGQPGSDAAPGEQGPKGPNGAPGKPGAPGAPGDEGLPAVCEPVQKGEPGSTGEPGPVGPPGPSGQPGNDGTPGQPGPKGPPGPDGKPGADGNPGQPGPVGPPGTPGERGICPKYCAIDGGIFFEDGTRR.

3 triple-helical region regions span residues 106-135 (GPQGAPGAPGKPGRPGKPGAPGFPGNPGKA), 154-210 (GPPG…EGLP), and 219-278 (GEPG…PGTP). A disordered region spans residues 108–284 (QGAPGAPGKP…PGTPGERGIC (177 aa)). Over residues 144–159 (TPPPCKPCPQGPPGAP) the composition is skewed to pro residues. Residues 188–197 (PKGPNGAPGK) show a composition bias toward low complexity. Composition is skewed to pro residues over residues 247–257 (QPGPKGPPGPD) and 268–277 (QPGPVGPPGT).

Belongs to the cuticular collagen family. Collagen polypeptide chains are complexed within the cuticle by disulfide bonds and other types of covalent cross-links.

Nematode cuticles are composed largely of collagen-like proteins. The cuticle functions both as an exoskeleton and as a barrier to protect the worm from its environment. Mutations in dpy-13 affects the body shape. The protein is Cuticle collagen dpy-13 (dpy-13) of Caenorhabditis elegans.